The chain runs to 254 residues: 5-oxoprolinase subunit A (254 aa).

Belongs to the LamB/PxpA family. In terms of assembly, forms a complex composed of PxpA, PxpB and PxpC.

It carries out the reaction 5-oxo-L-proline + ATP + 2 H2O = L-glutamate + ADP + phosphate + H(+). Its function is as follows. Catalyzes the cleavage of 5-oxoproline to form L-glutamate coupled to the hydrolysis of ATP to ADP and inorganic phosphate. The sequence is that of 5-oxoprolinase subunit A from Bacillus mycoides (strain KBAB4) (Bacillus weihenstephanensis).